The sequence spans 539 residues: MKLQAVMETLQRQQRARLQQELEARQLQQDSSEGRTPPSAGYPGNGSDEAEPEALKIQRAQAAALAAMRAAAAGLSQQPSPAASEEEDGESMASDEEDEKERDGESERYQDMASEEEDLKGKWDEDDFEDEGEDEYEDMEEGIGVNEAGRVGKGSTLPPKHSSQQAFPSQRSQGAERAGLPLSGHPQLQDHGDWTYEEQFKQLYELDGDPKRKEFLDDLFSFMQKRGTPVNRIPIMAKQVLDLYMLYVLVTEKGGLVEVINKKLWREITKGLNLPTSITSAAFTLRTQYMKYLYPYECEKRGLSNPNELQAAIDSNRREGRRQSFGGTLFTYSPSGAPSMLSSPKLQVSGLSLGGAALNGSTLSSMQKIKKEEDSPISLAMPPRIPVTLAGHSMVAAQVAAQAAALEQLREKLESGEPPEKKMALGSEEQQRIIQRTIQHNLLAMTAQLPMNIRINSQAEGRQDSAVNLTTNGTNSISMSVELNGIVYTGVLFAQPPTSASGTSKGSSNRTGSIGGGSSNSQAAPPSTPSAPNSNNPSP.

Residues Met-1–Asp-190 are disordered. A compositionally biased stretch (low complexity) spans Leu-55–Ala-73. Residues Ser-84–Lys-100 show a composition bias toward acidic residues. The segment covering Glu-101 to Gln-110 has biased composition (basic and acidic residues). The span at Ala-113–Glu-141 shows a compositional bias: acidic residues. Polar residues predominate over residues His-161–Gln-173. The ARID domain occupies Asp-209 to Arg-301. The 96-residue stretch at Ala-404–Ser-499 folds into the REKLES domain. The segment at Ala-405 to Gln-448 is important for nuclear localization. Residues Pro-450–Thr-471 form a homodimerization region. Positions Gln-495–Gly-502 are important for cytoplasmic localization. A compositionally biased stretch (polar residues) spans Pro-497–Gly-512. The segment at Pro-497 to Pro-539 is disordered. Over residues Ser-519–Pro-539 the composition is skewed to low complexity.

As to quaternary structure, homodimer.

It is found in the nucleus. Its subcellular location is the cytoplasm. Functionally, transcription factor required for smad1 and smad2-mediated responses to TGFbeta during mesoderm induction. This chain is AT-rich interactive domain-containing protein 3A (arid3a), found in Xenopus laevis (African clawed frog).